The following is a 54-amino-acid chain: Large ribosomal subunit protein bL33B (54 aa).

The protein belongs to the bacterial ribosomal protein bL33 family.

The sequence is that of Large ribosomal subunit protein bL33B from Mycolicibacterium vanbaalenii (strain DSM 7251 / JCM 13017 / BCRC 16820 / KCTC 9966 / NRRL B-24157 / PYR-1) (Mycobacterium vanbaalenii).